A 569-amino-acid chain; its full sequence is Endonuclease/exonuclease/phosphatase family domain-containing protein 1 (569 aa).

The disordered stretch occupies residues 1 to 20 (MGSTLGCHRSIPRDPSDLSH). Gly2 is lipidated: N-myristoyl glycine. Residues 11-20 (IPRDPSDLSH) are compositionally biased toward basic and acidic residues. Phosphoserine is present on residues Ser16, Ser21, and Ser25. One can recognise a HhH domain in the interval 38–67 (ERLNINTATEEELMTLPGVTRAVARSIVEY). Residues Ser106, Ser110, Ser160, and Ser173 each carry the phosphoserine modification. A disordered region spans residues 200–224 (SRPPSTHTNGGLTFTAKPHPSPTSL). Over residues 202–211 (PPSTHTNGGL) the composition is skewed to polar residues. Thr265 carries the post-translational modification Phosphothreonine. The disordered stretch occupies residues 548-569 (EVPRNGNGVTLEPSEANVKHER).

This chain is Endonuclease/exonuclease/phosphatase family domain-containing protein 1 (Eepd1), found in Rattus norvegicus (Rat).